A 220-amino-acid polypeptide reads, in one-letter code: GTP cyclohydrolase 1 (220 aa).

Residues Cys110, His113, and Cys181 each coordinate Zn(2+).

Belongs to the GTP cyclohydrolase I family. In terms of assembly, toroid-shaped homodecamer, composed of two pentamers of five dimers.

The enzyme catalyses GTP + H2O = 7,8-dihydroneopterin 3'-triphosphate + formate + H(+). The protein operates within cofactor biosynthesis; 7,8-dihydroneopterin triphosphate biosynthesis; 7,8-dihydroneopterin triphosphate from GTP: step 1/1. The sequence is that of GTP cyclohydrolase 1 from Baumannia cicadellinicola subsp. Homalodisca coagulata.